Here is a 181-residue protein sequence, read N- to C-terminus: MLFQGFNVVINATTQGVPKIVESLFPNLPNFIAHLLATIILVIVLTKLVYKPYKQMIEKQTQKITEVLSDAIEKQTQANIKIKQANTLLEDAKTESVSILKTARIDAEIQKNKIIDNANLQAKNIQSYAQNSIKQEKIKAQLEIKNTIVNLAINSAEKILNKEIDKNTNKQLIEEFIKELD.

Residues 24 to 44 (LFPNLPNFIAHLLATIILVIV) traverse the membrane as a helical segment.

The protein belongs to the ATPase B chain family. In terms of assembly, F-type ATPases have 2 components, F(1) - the catalytic core - and F(0) - the membrane proton channel. F(1) has five subunits: alpha(3), beta(3), gamma(1), delta(1), epsilon(1). F(0) has three main subunits: a(1), b(2) and c(10-14). The alpha and beta chains form an alternating ring which encloses part of the gamma chain. F(1) is attached to F(0) by a central stalk formed by the gamma and epsilon chains, while a peripheral stalk is formed by the delta and b chains.

Its subcellular location is the cell membrane. Its function is as follows. F(1)F(0) ATP synthase produces ATP from ADP in the presence of a proton or sodium gradient. F-type ATPases consist of two structural domains, F(1) containing the extramembraneous catalytic core and F(0) containing the membrane proton channel, linked together by a central stalk and a peripheral stalk. During catalysis, ATP synthesis in the catalytic domain of F(1) is coupled via a rotary mechanism of the central stalk subunits to proton translocation. Component of the F(0) channel, it forms part of the peripheral stalk, linking F(1) to F(0). The sequence is that of ATP synthase subunit b from Mycoplasma mycoides subsp. mycoides SC (strain CCUG 32753 / NCTC 10114 / PG1).